The sequence spans 338 residues: Peptidyl-prolyl cis-trans isomerase cyp11 (338 aa).

In terms of domain architecture, PPIase cyclophilin-type spans 7–172 (FFDIDVDGNR…HNVMIANCGE (166 aa)). Positions 186–338 (ASAVSDESED…RGRFKYRPTY (153 aa)) are disordered. The segment covering 208 to 218 (DDSSSDEDSEE) has biased composition (acidic residues). Residues 223–242 (RTKKKRSRKHSKKDKKKKKR) show a composition bias toward basic residues. Basic and acidic residues predominate over residues 243 to 309 (ESSNRKRSPE…PEKRSSERRV (67 aa)). Basic residues predominate over residues 329-338 (RGRFKYRPTY).

Belongs to the cyclophilin-type PPIase family.

The catalysed reaction is [protein]-peptidylproline (omega=180) = [protein]-peptidylproline (omega=0). In terms of biological role, PPIases accelerate the folding of proteins. It catalyzes the cis-trans isomerization of proline imidic peptide bonds in oligopeptides. The sequence is that of Peptidyl-prolyl cis-trans isomerase cyp11 (cyp11) from Rhizopus delemar (strain RA 99-880 / ATCC MYA-4621 / FGSC 9543 / NRRL 43880) (Mucormycosis agent).